The sequence spans 752 residues: DNA ligase (752 aa).

Residues 1-25 are disordered; sequence MKRNGFVPSNSVGRRGIPSNSTSSA. NAD(+) contacts are provided by residues 91 to 95, 140 to 141, and glutamate 170; these read DADFD and SL. The active-site N6-AMP-lysine intermediate is the lysine 172. NAD(+) contacts are provided by arginine 193, glutamate 233, lysine 350, and lysine 374. Zn(2+)-binding residues include cysteine 474, cysteine 477, cysteine 493, and cysteine 499. Residues 669-752 form the BRCT domain; the sequence is STPRTLAGLT…TLLDGGPAAL (84 aa).

It belongs to the NAD-dependent DNA ligase family. LigA subfamily. Requires Mg(2+) as cofactor. Mn(2+) is required as a cofactor.

The catalysed reaction is NAD(+) + (deoxyribonucleotide)n-3'-hydroxyl + 5'-phospho-(deoxyribonucleotide)m = (deoxyribonucleotide)n+m + AMP + beta-nicotinamide D-nucleotide.. Functionally, DNA ligase that catalyzes the formation of phosphodiester linkages between 5'-phosphoryl and 3'-hydroxyl groups in double-stranded DNA using NAD as a coenzyme and as the energy source for the reaction. It is essential for DNA replication and repair of damaged DNA. In Nocardioides sp. (strain ATCC BAA-499 / JS614), this protein is DNA ligase.